The chain runs to 340 residues: MLDPLKTSSYDYNLPKNQIATYPVTPADSAKLLIFNRSTNTIIHSTFKDILEFLPNDLSIFLNDTKVIKARIFGVKDSGGQIELLLNKPLFMDRYLVMIRGKVRVGTKLLFDENLSAIVEEVDEDGSRIVEFFQDEKKLDFLSLVEILNKIGHLPLPPYMNREDEKQDEQNYQTLFAKNYGAVAAPTASLHFTPELLKNLEEKYGLNYLTLHVGAGTFKPVDVEDILSHPMHSEYFEIGIDAKKNLDKANKVLAVGTTVTRTIEYYARTNKIQGECDLFLNPANKPIKVDYLLTNFHLPKSTLIMLVASFIGLEKTLEIYETAIKENYRFYSYGDGMLII.

This sequence belongs to the QueA family. As to quaternary structure, monomer.

It localises to the cytoplasm. The catalysed reaction is 7-aminomethyl-7-carbaguanosine(34) in tRNA + S-adenosyl-L-methionine = epoxyqueuosine(34) in tRNA + adenine + L-methionine + 2 H(+). Its pathway is tRNA modification; tRNA-queuosine biosynthesis. Functionally, transfers and isomerizes the ribose moiety from AdoMet to the 7-aminomethyl group of 7-deazaguanine (preQ1-tRNA) to give epoxyqueuosine (oQ-tRNA). This is S-adenosylmethionine:tRNA ribosyltransferase-isomerase from Aliarcobacter butzleri (strain RM4018) (Arcobacter butzleri).